Consider the following 316-residue polypeptide: Phosphate acyltransferase (316 aa).

The protein belongs to the PlsX family. Homodimer. Probably interacts with PlsY.

Its subcellular location is the cytoplasm. It carries out the reaction a fatty acyl-[ACP] + phosphate = an acyl phosphate + holo-[ACP]. The protein operates within lipid metabolism; phospholipid metabolism. Its function is as follows. Catalyzes the reversible formation of acyl-phosphate (acyl-PO(4)) from acyl-[acyl-carrier-protein] (acyl-ACP). This enzyme utilizes acyl-ACP as fatty acyl donor, but not acyl-CoA. The sequence is that of Phosphate acyltransferase from Chlamydia felis (strain Fe/C-56) (Chlamydophila felis).